We begin with the raw amino-acid sequence, 64 residues long: MSKLVKTLTVDEISKIQTNGGKPAWCWYTLAMCGAGYDSGTCDYMYSHCFGVKHSSGGGGSYHC.

The first 21 residues, 1–21 (MSKLVKTLTVDEISKIQTNGG), serve as a signal peptide directing secretion. The lanthionine (Ser-Cys) cross-link spans 61-64 (SYHC).

In terms of processing, contains 2 disulfide bonds.

It is found in the secreted. Its function is as follows. Bacteriocin with a narrow antibacterial spectrum. Antibacterial activity against the Gram-positive bacteria L.plantarun, L.pentosus, L.curvatus, L.lindneri, L.mesenteroides and E.faecilis. Lacks antibacterial activity against the Gram-positive bacteria L.brevis, L.sakei, L.lactis, P.acidilactici, B.subtilis, B.cereus, L.monocytogenes and S.aureus, and against the Gram-negative bacteria E.coli and S.typhimurium. In Lactiplantibacillus plantarum (Lactobacillus plantarum), this protein is Bacteriocin plantaricin ASM1.